A 157-amino-acid chain; its full sequence is Small ribosomal subunit protein uS7 (157 aa).

The protein belongs to the universal ribosomal protein uS7 family. Part of the 30S ribosomal subunit. Contacts proteins S9 and S11.

In terms of biological role, one of the primary rRNA binding proteins, it binds directly to 16S rRNA where it nucleates assembly of the head domain of the 30S subunit. Is located at the subunit interface close to the decoding center, probably blocks exit of the E-site tRNA. The polypeptide is Small ribosomal subunit protein uS7 (Salinibacter ruber (strain DSM 13855 / M31)).